Here is a 277-residue protein sequence, read N- to C-terminus: Intercellular adhesion molecule 2 (277 aa).

The N-terminal stretch at Met-1 to Glu-22 is a signal peptide. At Lys-23 to Gln-222 the chain is on the extracellular side. Ig-like C2-type domains follow at residues Thr-39 to Lys-98 and Gly-127 to Arg-196. Asn-45, Asn-82, Asn-158, Asn-176, and Asn-186 each carry an N-linked (GlcNAc...) asparagine glycan. Intrachain disulfides connect Cys-46-Cys-91, Cys-50-Cys-95, and Cys-134-Cys-189. Residues Met-223 to Phe-247 traverse the membrane as a helical segment. Residues Gly-248–Val-277 are Cytoplasmic-facing. Residues His-250 to Val-277 are required for interaction with EZR, MSN and RDX and co-localization to microvilli.

Belongs to the immunoglobulin superfamily. ICAM family. In terms of assembly, interacts with RDX, EZR and MSN. Expressed in endothelial cells and leukocytes. High levels found in lung.

It localises to the membrane. The protein localises to the cell projection. The protein resides in the microvillus. Its function is as follows. ICAM proteins are ligands for the leukocyte adhesion protein LFA-1 (integrin alpha-L/beta-2). ICAM2 may play a role in lymphocyte recirculation by blocking LFA-1-dependent cell adhesion. It mediates adhesive interactions important for antigen-specific immune response, NK-cell mediated clearance, lymphocyte recirculation, and other cellular interactions important for immune response and surveillance. The chain is Intercellular adhesion molecule 2 (Icam2) from Mus musculus (Mouse).